The primary structure comprises 341 residues: Diguanylate cyclase DgcP (341 aa).

The GAF domain occupies serine 18–isoleucine 154. In terms of domain architecture, GGDEF spans histidine 204–proline 337. Residue aspartate 212 participates in Mg(2+) binding. 3 residues coordinate substrate: asparagine 220, histidine 225, and aspartate 229. Aspartate 255 lines the Mg(2+) pocket. Aspartate 255 acts as the Proton acceptor in catalysis.

In terms of assembly, homodimer. The cofactor is Mg(2+).

It carries out the reaction 2 GTP = 3',3'-c-di-GMP + 2 diphosphate. The protein operates within purine metabolism; 3',5'-cyclic di-GMP biosynthesis. Its function is as follows. Catalyzes the synthesis of cyclic-di-GMP (c-di-GMP) via the condensation of 2 GTP molecules. Cyclic-di-GMP is a second messenger which controls cell surface-associated traits in bacteria. This chain is Diguanylate cyclase DgcP, found in Escherichia coli (strain K12).